The sequence spans 76 residues: RNA-binding protein KhpA (76 aa).

A KH domain is found at G30–D76.

It belongs to the KhpA RNA-binding protein family.

It localises to the cytoplasm. A probable RNA-binding protein. The chain is RNA-binding protein KhpA from Leifsonia xyli subsp. xyli (strain CTCB07).